Here is a 587-residue protein sequence, read N- to C-terminus: MLCLSLNSSSTSPPKLPLHHSFSRRGIRSWVRSPCVQRKKLGFWSSPKAVLSAVSGAGSEAGKVEEAEEYDAIVIGSGIGGLVAATQLAVKGARVLVLEKYVIPGGSSGFFQRDGFTFDVGSSVMFGFSDKGNLNLITQALEAVDCKLRTIPDPTTVHFHLPDNLSIRVHREYDMFISELVNYFPHEKEGIRRFYNECWKIFNSLNSLELKSLEEPMYLFGQFFRKPVECLTLAFYLPQNAGDIARKFIKDPQLLSFIDAECFIVSTVKALHTPMINASMVLCDRHFGGINYPVGGVGGIAKALANGLVNKGSKLLYKANVTKILLKDGKAVGVKLSNGREFFAKTVISNATRWDTFGKLLKVEDIPQEEKNFKKIYLKAPSFLSIHMGVKAFVLPPDTDCHHFILEDNWGRLELPYGSIFLSIPTVLDPSLAPEGHHIFHIFTTSSIENWEGLSHKEYEEKKELVADEIITRLEKKLFPGLKDSVVLKEVGTPKTHRRFLARDSGTYGPMPRKVPKGLLGMPFNTTAINGLYCVGDSCFPGQGVIAVAFSGVMCAHRVAADLGFEKKAPVLDAALLRLLGWLRTVA.

Residues 1-50 (MLCLSLNSSSTSPPKLPLHHSFSRRGIRSWVRSPCVQRKKLGFWSSPKAV) constitute a chloroplast transit peptide.

This sequence belongs to the carotenoid/retinoid oxidoreductase family. CrtISO subfamily. The cofactor is NAD(+). NADP(+) is required as a cofactor. Requires FAD as cofactor. Up-regulated in the flower buds and flower lip tissue, while it is weakly expressed in leaves.

Its subcellular location is the plastid. The protein resides in the chloroplast membrane. It catalyses the reaction 7,7',9,9'-tetra-cis-lycopene = all-trans-lycopene. It participates in carotenoid biosynthesis; lycopene biosynthesis. Its function is as follows. Carotene cis-trans-isomerase that converts 7,9,9'-tri-cis-neurosporene to 9'-cis-neurosporene and 7,9,9',7'-tetra-cis-lycopene (also known as prolycopene) into all-trans-lycopene. Isomerization requires redox-active components, suggesting that isomerization is achieved by a reversible redox reaction acting at specific double bonds. Isomerizes adjacent cis-double bonds at C7 and C9 pairwise into the trans-configuration, but is incapable of isomerizing single cis-double bonds at C9 and C9'. The chain is Prolycopene isomerase 2, chloroplastic (CRTISO2) from Oncidium hybrid cultivar (Orchid).